A 239-amino-acid chain; its full sequence is 1-(5-phosphoribosyl)-5-[(5-phosphoribosylamino)methylideneamino] imidazole-4-carboxamide isomerase (239 aa).

The active-site Proton acceptor is Asp7. Asp129 serves as the catalytic Proton donor.

Belongs to the HisA/HisF family.

It localises to the cytoplasm. It catalyses the reaction 1-(5-phospho-beta-D-ribosyl)-5-[(5-phospho-beta-D-ribosylamino)methylideneamino]imidazole-4-carboxamide = 5-[(5-phospho-1-deoxy-D-ribulos-1-ylimino)methylamino]-1-(5-phospho-beta-D-ribosyl)imidazole-4-carboxamide. The protein operates within amino-acid biosynthesis; L-histidine biosynthesis; L-histidine from 5-phospho-alpha-D-ribose 1-diphosphate: step 4/9. In Lactiplantibacillus plantarum (strain ATCC BAA-793 / NCIMB 8826 / WCFS1) (Lactobacillus plantarum), this protein is 1-(5-phosphoribosyl)-5-[(5-phosphoribosylamino)methylideneamino] imidazole-4-carboxamide isomerase.